The primary structure comprises 327 residues: Interleukin-12 subunit beta (327 aa).

The signal sequence occupies residues 1 to 22 (MHPQQLVVSWFSLVLLASPIVA). An Ig-like C2-type domain is found at 23 to 106 (MWELEKNVYV…LSRSLLLLHK (84 aa)). A disulfide bond links C50 and C90. N223 carries N-linked (GlcNAc...) asparagine glycosylation. Residues 238–327 (PPKNLQLRPL…WSEWASVSCS (90 aa)) enclose the Fibronectin type-III domain.

The protein belongs to the IL-12B family. As to quaternary structure, heterodimer with IL12A; disulfide-linked. The heterodimer is known as interleukin IL-12. Heterodimer with IL23A; disulfide-linked. The heterodimer is known as interleukin IL-23. Also secreted as a monomer. Interacts with NBR1; this interaction promotes IL-12 secretion.

It is found in the secreted. Cytokine that can act as a growth factor for activated T and NK cells, enhance the lytic activity of NK/lymphokine-activated killer cells, and stimulate the production of IFN-gamma by resting PBMC. Its function is as follows. Associates with IL23A to form the IL-23 interleukin, a heterodimeric cytokine which functions in innate and adaptive immunity. IL-23 may constitute with IL-17 an acute response to infection in peripheral tissues. IL-23 binds to a heterodimeric receptor complex composed of IL12RB1 and IL23R, activates the Jak-Stat signaling cascade, stimulates memory rather than naive T-cells and promotes production of pro-inflammatory cytokines. IL-23 induces autoimmune inflammation and thus may be responsible for autoimmune inflammatory diseases and may be important for tumorigenesis. In Bos taurus (Bovine), this protein is Interleukin-12 subunit beta (IL12B).